The sequence spans 744 residues: MMNMKIVLFSLLLFVIRWNIISCNKNDKNQGVDMNVLNNYENLFKFVKCEYCNEHTYVKGKKAPSDPQCADIKEECKELLKEKQYTDSVTYLMDGFKSANNSANNGKKNNAEEMKNLVNFLQSHKKLIKALKKNIESIQNKKHLIYKNKSYNPLLLSCVKKMNMLKENVDYIQKNQNLFKELMNQKATYSFVNTKKKIISLKSQGHKKETSQNQNENNDNQKYQEVNDEDDVNDEEDTNDDEDTNDEEDTNDDEDTNDDEDTNDEEDTNDEEDHENNNATAYELGIVPVNDVLNVNMKNMITGNNFMDVVKNTLAQSGGLGSNDLINFLNQGKEIGENLLNITKMNLGDKNNLESFPLDELNMLKDNLINYEFILDNLKTSVLNKLKDLLLRLLYKAYVSYKKRKAQEKGLPEPTVTNEEYVEELKKGILDMGIKLLFSKVKSLLKKLKNKIFPKKKEDNQAVDTKSMEEPKVKAQPALRGVEPTEDSNIMNSINNVMDEIDFFEKELIENNNTPNVVPPTQSKKKNKNETVSGMDENFDNHPENYFKEEYYYDENDDMEVKVKKIGVTLKKFEPLKNGNVSETIKLIHLGNKDKKHIEAINNDIQIIKQELQAIYNELMNYTNGNKNIQQIFQQNILENDVLNQETEEEMEKQVEAITKQIEAEVDALAPKNKEEEEKEKEKEKEKEEKEKEEKEKEEKEEEEKEKEKEKEEKEKEEKEKEEEQEEEEEEEIVPENLTTEESK.

The N-terminal stretch at Met-1–Cys-23 is a signal peptide. The tract at residues Lys-77–Glu-235 is interaction with MSP1 and host SLC4A1/Band 3. Disordered stretches follow at residues Lys-202–Tyr-282, Asp-459–Asp-487, Asn-512–Asp-540, and Val-666–Lys-744. Residues Ser-211 to Gln-224 show a composition bias toward polar residues. Repeat copies occupy residues Val-226–Asp-231, Val-232–Asp-237, Thr-238–Asp-243, Thr-244–Asp-249, Thr-250–Asp-255, Thr-256–Asp-261, Thr-262–Asp-267, and Thr-268–Asp-273. Positions Val-226 to Asp-273 are 8 X 6 AA tandem repeats of [VT]-N-D-[ED]-[ED]-D. Over residues Val-226–His-274 the composition is skewed to acidic residues. The interaction with MSP1 and host SLC4A1/Band 3 stretch occupies residues Leu-364 to Lys-528. Residues Asp-459 to Val-473 are compositionally biased toward basic and acidic residues. Over residues Asn-512–Thr-521 the composition is skewed to low complexity. Residues Asn-644–Val-734 adopt a coiled-coil conformation. 2 stretches are compositionally biased toward basic and acidic residues: residues Lys-672 to Glu-698 and Glu-706 to Lys-719. Positions Glu-720–Val-734 are enriched in acidic residues.

The protein belongs to the plasmodium ABRA family. As to quaternary structure, forms a complex composed of MSP1, MSP6, MSP7, MSP9 and MSP3; within the complex, MSP6 and MSP9 mediate the binding to the host erythrocyte. Interacts with MSP1 subunits p19 and p42; the interaction is direct. Interacts with host SLC4A1/Band 3 protein (via the 5ABC region). MSP1 subunits p19 or p42, and MSP9 form a co-ligand complex that interacts with host SLC4A1/Band 3 protein. Post-translationally, not glycosylated.

The protein resides in the cell membrane. It localises to the parasitophorous vacuole lumen. It is found in the secreted. During the asexual blood stage, involved in the sialic acid-independent (SAID) merozoite invasion of host erythrocytes by binding to host SLC4A1/Band 3 protein on the surface of the host erythrocyte. In Plasmodium falciparum (isolate 7G8), this protein is Merozoite surface protein 9.